Consider the following 367-residue polypeptide: DNA replication and repair protein RecF (367 aa).

31-38 (GENGSGKT) provides a ligand contact to ATP.

Belongs to the RecF family.

The protein localises to the cytoplasm. In terms of biological role, the RecF protein is involved in DNA metabolism; it is required for DNA replication and normal SOS inducibility. RecF binds preferentially to single-stranded, linear DNA. It also seems to bind ATP. This chain is DNA replication and repair protein RecF, found in Saccharophagus degradans (strain 2-40 / ATCC 43961 / DSM 17024).